The chain runs to 482 residues: Aspartyl/glutamyl-tRNA(Asn/Gln) amidotransferase subunit B (482 aa).

It belongs to the GatB/GatE family. GatB subfamily. Heterotrimer of A, B and C subunits.

It catalyses the reaction L-glutamyl-tRNA(Gln) + L-glutamine + ATP + H2O = L-glutaminyl-tRNA(Gln) + L-glutamate + ADP + phosphate + H(+). It carries out the reaction L-aspartyl-tRNA(Asn) + L-glutamine + ATP + H2O = L-asparaginyl-tRNA(Asn) + L-glutamate + ADP + phosphate + 2 H(+). Allows the formation of correctly charged Asn-tRNA(Asn) or Gln-tRNA(Gln) through the transamidation of misacylated Asp-tRNA(Asn) or Glu-tRNA(Gln) in organisms which lack either or both of asparaginyl-tRNA or glutaminyl-tRNA synthetases. The reaction takes place in the presence of glutamine and ATP through an activated phospho-Asp-tRNA(Asn) or phospho-Glu-tRNA(Gln). The chain is Aspartyl/glutamyl-tRNA(Asn/Gln) amidotransferase subunit B from Methanoregula boonei (strain DSM 21154 / JCM 14090 / 6A8).